The chain runs to 223 residues: uncharacterized protein (223 aa).

The next 7 helical transmembrane spans lie at threonine 25–alanine 45, isoleucine 46–phenylalanine 66, leucine 78–phenylalanine 98, glycine 105–alanine 125, phenylalanine 140–serine 160, threonine 161–phenylalanine 181, and isoleucine 199–methionine 219.

Belongs to the BI1 family.

Its subcellular location is the cell membrane. This is an uncharacterized protein from Vibrio cholerae serotype O1 (strain ATCC 39315 / El Tor Inaba N16961).